Here is a 788-residue protein sequence, read N- to C-terminus: Endonuclease MutS2 (788 aa).

Residue 334-341 participates in ATP binding; it reads GPNTGGKT. Residues 713 to 788 form the Smr domain; it reads LDLRGQRYEE…GTGATIVYLQ (76 aa).

It belongs to the DNA mismatch repair MutS family. MutS2 subfamily. As to quaternary structure, homodimer. Binds to stalled ribosomes, contacting rRNA.

In terms of biological role, endonuclease that is involved in the suppression of homologous recombination and thus may have a key role in the control of bacterial genetic diversity. Functionally, acts as a ribosome collision sensor, splitting the ribosome into its 2 subunits. Detects stalled/collided 70S ribosomes which it binds and splits by an ATP-hydrolysis driven conformational change. Acts upstream of the ribosome quality control system (RQC), a ribosome-associated complex that mediates the extraction of incompletely synthesized nascent chains from stalled ribosomes and their subsequent degradation. Probably generates substrates for RQC. In Lactobacillus johnsonii (strain CNCM I-12250 / La1 / NCC 533), this protein is Endonuclease MutS2.